The primary structure comprises 1735 residues: Glutamine and serine-rich protein 1 (1735 aa).

At methionine 1 the chain carries N-acetylmethionine. Over residues alanine 267–proline 297 the composition is skewed to polar residues. Disordered regions lie at residues alanine 267–isoleucine 301, threonine 414–threonine 440, serine 479–alanine 518, and leucine 533–glutamate 561. The segment covering leucine 417 to threonine 440 has biased composition (low complexity). A phosphoserine mark is found at serine 586, serine 615, and serine 886. Threonine 949 bears the Phosphothreonine mark. A disordered region spans residues glycine 964–glycine 1033. Residues glutamate 971–leucine 985 show a composition bias toward polar residues. Position 987 is a phosphoserine (serine 987). The segment covering serine 997 to glutamate 1024 has biased composition (polar residues). Residues lysine 1058 and lysine 1083 each participate in a glycyl lysine isopeptide (Lys-Gly) (interchain with G-Cter in SUMO2) cross-link. Disordered stretches follow at residues lysine 1073–arginine 1132 and arginine 1178–aspartate 1217. The segment covering serine 1120 to arginine 1132 has biased composition (basic and acidic residues). A phosphoserine mark is found at serine 1211, serine 1230, serine 1231, and serine 1239. Residues threonine 1256 to threonine 1286 are disordered. Residues alanine 1269 to threonine 1286 are compositionally biased toward low complexity. Position 1341 is a phosphothreonine (threonine 1341). At serine 1348 the chain carries Phosphoserine. The tract at residues valine 1441–proline 1532 is disordered. Residues lysine 1449 to threonine 1478 are compositionally biased toward polar residues. A compositionally biased stretch (basic and acidic residues) spans valine 1492 to phenylalanine 1508.

In terms of assembly, interacts with TET1.

The protein resides in the chromosome. Its function is as follows. Plays an essential role in the protection and maintenance of transcriptional and developmental programs. Protects many bivalent promoters and poised enhancers from hypermethylation, showing a marked preference for these regulatory elements over other types of promoters or enhancers. Mechanistically, cooperates with TET1 and binds to DNA in a common complex to inhibit the binding of DNMT3A/3B and therefore de novo methylation. The polypeptide is Glutamine and serine-rich protein 1 (QSER1) (Homo sapiens (Human)).